A 737-amino-acid polypeptide reads, in one-letter code: Glycogen [starch] synthase, muscle (737 aa).

Ser8 bears the Phosphoserine; by AMPK and PKA mark. A Phosphoserine modification is found at Ser11. Lys39 is a binding site for UDP. 2 residues coordinate UDP-alpha-D-glucose: His205 and Arg211. Positions 291, 292, 294, 297, and 301 each coordinate alpha-D-glucose 6-phosphate. Arg331 is a binding site for UDP. Arg331 contacts UDP-alpha-D-glucose. A Phosphoserine modification is found at Ser412. His501 contacts alpha-D-glucose 6-phosphate. 3 residues coordinate UDP-alpha-D-glucose: Glu510, Trp512, and Gly513. A UDP-binding site is contributed by Thr515. Positions 582 and 586 each coordinate alpha-D-glucose 6-phosphate. The interval 634 to 737 (YRYPRPASVP…PTSSLGEERN (104 aa)) is disordered. Ser641 is modified (phosphoserine; by DYRK2, GSK3-alpha, GSK3-beta and PASK). A phosphoserine; by GSK3-alpha and GSK3-beta mark is found at Ser645 and Ser649. A Phosphoserine modification is found at Ser652. At Ser653 the chain carries Phosphoserine; by GSK3-alpha and GSK3-beta. Residue Ser657 is modified to Phosphoserine; by CK2. Residues 658–681 (EDEEDPRNGPLEEDGERYDEDEEA) are compositionally biased toward acidic residues. Residues 682–695 (AKDRRNIRAPEWPR) are compositionally biased toward basic and acidic residues. Position 698 is a phosphoserine (Ser698). Positions 698–714 (SCTSSTSGSKRNSVDTA) are enriched in polar residues. At Thr700 the chain carries Phosphothreonine. Position 710 is a phosphoserine (Ser710). The span at 715-737 (TSSSLSTPSEPLSPTSSLGEERN) shows a compositional bias: low complexity. Residue Thr721 is modified to Phosphothreonine. Phosphoserine occurs at positions 727 and 731.

Belongs to the glycosyltransferase 3 family. Part of the GYS1-GYG1 complex, a heterooctamer composed of a tetramer of GYS1 and 2 dimers of GYG1, where each GYS1 protomer binds to one GYG1 subunit (via GYG1 C-terminus); the GYS1 tetramer may dissociate from GYG1 dimers to continue glycogen polymerization on its own. In terms of processing, phosphorylation at Ser-8 by AMPK inactivates the enzyme activity. Primed phosphorylation at Ser-657 (site 5) by CSNK2A1 and CSNK2A2 is required for inhibitory phosphorylation at Ser-641 (site 3a), Ser-645 (site 3b), Ser-649 (site 3c) and Ser-653 (site 4) by GSK3A an GSK3B. Phosphorylated at Ser-641 by PASK, leading to inactivation; phosphorylation by PASK is inhibited by glycogen. Phosphorylated at Ser-641 by DYRK2, leading to inactivation. Dephosphorylation at Ser-641 and Ser-645 by PP1 activates the enzyme.

It carries out the reaction [(1-&gt;4)-alpha-D-glucosyl](n) + UDP-alpha-D-glucose = [(1-&gt;4)-alpha-D-glucosyl](n+1) + UDP + H(+). The protein operates within glycan biosynthesis; glycogen biosynthesis. Allosteric activation by glucose-6-phosphate. Phosphorylation reduces the activity towards UDP-glucose. When in the non-phosphorylated state, glycogen synthase does not require glucose-6-phosphate as an allosteric activator; when phosphorylated it does. Its function is as follows. Glycogen synthase participates in the glycogen biosynthetic process along with glycogenin and glycogen branching enzyme. Extends the primer composed of a few glucose units formed by glycogenin by adding new glucose units to it. In this context, glycogen synthase transfers the glycosyl residue from UDP-Glc to the non-reducing end of alpha-1,4-glucan. The chain is Glycogen [starch] synthase, muscle (GYS1) from Pongo abelii (Sumatran orangutan).